The chain runs to 140 residues: MSKRGRGGSAGGKFRISLGLPVGAVINCADNTGAKNLYVIAVHGIRGRLNRLPAAGVGDMFVATVKKGKPELRKKVMPAVVIRQRKPFRRRDGVFLYFEDNAGVIVNNKGEMKGSAITGPVAKECADLWPRIASNAGSIA.

It belongs to the universal ribosomal protein uL14 family.

In Aedes aegypti (Yellowfever mosquito), this protein is Large ribosomal subunit protein uL14 (RpL23-A).